We begin with the raw amino-acid sequence, 501 residues long: Putative ribose/galactose/methyl galactoside import ATP-binding protein 1 (501 aa).

ABC transporter domains follow at residues Val5–Gln237 and Val249–Ser492. Gly37 to Ser44 contacts ATP.

The protein belongs to the ABC transporter superfamily. Carbohydrate importer 2 (CUT2) (TC 3.A.1.2) family.

It is found in the cell inner membrane. The enzyme catalyses D-ribose(out) + ATP + H2O = D-ribose(in) + ADP + phosphate + H(+). It carries out the reaction D-galactose(out) + ATP + H2O = D-galactose(in) + ADP + phosphate + H(+). Its function is as follows. Part of an ABC transporter complex involved in carbohydrate import. Could be involved in ribose, galactose and/or methyl galactoside import. Responsible for energy coupling to the transport system. The sequence is that of Putative ribose/galactose/methyl galactoside import ATP-binding protein 1 from Rhizobium meliloti (strain 1021) (Ensifer meliloti).